Reading from the N-terminus, the 208-residue chain is V-type ATP synthase subunit E (208 aa).

Belongs to the V-ATPase E subunit family.

Functionally, produces ATP from ADP in the presence of a proton gradient across the membrane. In Chlamydia muridarum (strain MoPn / Nigg), this protein is V-type ATP synthase subunit E (atpE).